Here is a 116-residue protein sequence, read N- to C-terminus: Beta-D-galactosidase Rv1717 (116 aa).

A Cupin type-2 domain is found at 40–107 (LSVYRPGGTA…TDRQALLLVT (68 aa)).

It is found in the secreted. Its subcellular location is the cell wall. The enzyme catalyses Hydrolysis of terminal non-reducing beta-D-galactose residues in beta-D-galactosides.. Beta-galactosidase activity is activated by Mg(2+) and significantly inhibited by Ca(2+), Cd(2+), Fe(2+), Ni(2+), Cu(2+) and Zn(2+). Inhibited by EDTA. Functionally, beta-D-galactopyranosidase that specifically recognizes the beta-glycosidic bonds formed with beta-D-galactopyranose (beta-D-Gal) or N-acetylgalactosamine (beta-D-GalNAc). May target the galactoside linkages in the exopolysaccharide component of the mycobacterial extracellular polymeric substance (EPS) and help dispersal of Mtb bacteria from a deteriorating biofilm. This is Beta-D-galactosidase Rv1717 from Mycobacterium tuberculosis (strain ATCC 25618 / H37Rv).